A 133-amino-acid polypeptide reads, in one-letter code: Protransforming growth factor alpha (133 aa).

A signal peptide spans 1 to 23 (MVPSAGQLALFALGIFLAVCQAL). Positions 24–38 (ENSTSALSDPPVAAA) are cleaved as a propeptide — removed in mature form. Residues 24-97 (ENSTSALSDP…AVVAASQKKQ (74 aa)) lie on the Extracellular side of the membrane. Residue Asn25 is glycosylated (N-linked (GlcNAc...) asparagine). The EGF-like domain maps to 42 to 82 (HFNDCPDSHTQFCFHGTCRFLLQEEKPACVCHSGYVGARCE). Cystine bridges form between Cys46–Cys59, Cys54–Cys70, and Cys72–Cys81. The propeptide at 89–133 (VVAASQKKQAITALVVVTIVALAVLIITCVLIHCCEVRKHSVVVP) is removed in mature form. The helical transmembrane segment at 98-120 (AITALVVVTIVALAVLIITCVLI) threads the bilayer. The Cytoplasmic portion of the chain corresponds to 121 to 133 (HCCEVRKHSVVVP).

Interacts with the PDZ domains of MAGI3, SDCBP and SNTA1. The interaction with SDCBP, is required for the targeting to the cell surface. In the endoplasmic reticulum, in its immature form (i.e. with a prosegment and lacking full N-glycosylation), interacts with CNIH. In the Golgi apparatus, may form a complex with CNIH and GORASP2. Interacts (via cytoplasmic C-terminal domain) with NKD2. Skin.

It localises to the secreted. The protein localises to the extracellular space. Its subcellular location is the cell membrane. In terms of biological role, TGF alpha is a mitogenic polypeptide that is able to bind to the EGF receptor/EGFR and to act synergistically with TGF beta to promote anchorage-independent cell proliferation in soft agar. The sequence is that of Protransforming growth factor alpha (TGFA) from Ovis aries (Sheep).